Consider the following 240-residue polypeptide: UDP-2,3-diacylglucosamine hydrolase (240 aa).

Mn(2+) contacts are provided by Asp-7, His-9, Asp-40, Asn-78, and His-113. A substrate-binding site is contributed by 78-79 (NR). Positions 121, 159, 163, 166, and 194 each coordinate substrate. The Mn(2+) site is built by His-194 and His-196.

This sequence belongs to the LpxH family. Mn(2+) is required as a cofactor.

It localises to the cell inner membrane. The enzyme catalyses UDP-2-N,3-O-bis[(3R)-3-hydroxytetradecanoyl]-alpha-D-glucosamine + H2O = 2-N,3-O-bis[(3R)-3-hydroxytetradecanoyl]-alpha-D-glucosaminyl 1-phosphate + UMP + 2 H(+). It participates in glycolipid biosynthesis; lipid IV(A) biosynthesis; lipid IV(A) from (3R)-3-hydroxytetradecanoyl-[acyl-carrier-protein] and UDP-N-acetyl-alpha-D-glucosamine: step 4/6. Its function is as follows. Hydrolyzes the pyrophosphate bond of UDP-2,3-diacylglucosamine to yield 2,3-diacylglucosamine 1-phosphate (lipid X) and UMP by catalyzing the attack of water at the alpha-P atom. Involved in the biosynthesis of lipid A, a phosphorylated glycolipid that anchors the lipopolysaccharide to the outer membrane of the cell. This Pseudomonas putida (strain W619) protein is UDP-2,3-diacylglucosamine hydrolase.